Here is a 336-residue protein sequence, read N- to C-terminus: Putative ataxin-3 homolog (336 aa).

A Josephin domain is found at glycine 10–serine 193. The Nucleophile role is filled by cysteine 23. Catalysis depends on histidine 132, which acts as the Proton acceptor. Asparagine 147 is a catalytic residue. The region spanning glutamine 244–proline 263 is the UIM domain. Positions isoleucine 281–aspartate 336 are disordered. Positions alanine 299 to leucine 327 are enriched in polar residues.

It localises to the nucleus. It carries out the reaction Thiol-dependent hydrolysis of ester, thioester, amide, peptide and isopeptide bonds formed by the C-terminal Gly of ubiquitin (a 76-residue protein attached to proteins as an intracellular targeting signal).. In terms of biological role, interacts with key regulators of transcription and represses transcription. Acts as a histone-binding protein that regulates transcription. Acts as a deubiquitinating enzyme. This chain is Putative ataxin-3 homolog, found in Oryza sativa subsp. japonica (Rice).